A 215-amino-acid chain; its full sequence is Cytochrome b6 (215 aa).

Residues 32–52 (IFYCLGGITLVCFLIQFATGF) traverse the membrane as a helical segment. C35 is a binding site for heme c. H86 and H100 together coordinate heme b. 3 consecutive transmembrane segments (helical) span residues 90 to 110 (ASMMVLMMILHVFRVYLTGGF), 116 to 136 (LTWVSGVILAVITVSFGVTGY), and 186 to 206 (AHTFVLPWLIAVFMLFHFLMI). The heme b site is built by H187 and H202.

The protein belongs to the cytochrome b family. PetB subfamily. In terms of assembly, the 4 large subunits of the cytochrome b6-f complex are cytochrome b6, subunit IV (17 kDa polypeptide, PetD), cytochrome f and the Rieske protein, while the 4 small subunits are PetG, PetL, PetM and PetN. The complex functions as a dimer. Requires heme b as cofactor. Heme c is required as a cofactor.

The protein localises to the cellular thylakoid membrane. Its function is as follows. Component of the cytochrome b6-f complex, which mediates electron transfer between photosystem II (PSII) and photosystem I (PSI), cyclic electron flow around PSI, and state transitions. The chain is Cytochrome b6 from Nostoc punctiforme (strain ATCC 29133 / PCC 73102).